The primary structure comprises 142 residues: Small ribosomal subunit protein uS12 (142 aa).

The interval 1–22 (MPTFNQLVRKGRKAAKKKSTAP) is disordered. Over residues 9–19 (RKGRKAAKKKS) the composition is skewed to basic residues. Asp-102 is modified (3-methylthioaspartic acid).

This sequence belongs to the universal ribosomal protein uS12 family. As to quaternary structure, part of the 30S ribosomal subunit. Contacts proteins S8 and S17. May interact with IF1 in the 30S initiation complex.

With S4 and S5 plays an important role in translational accuracy. Its function is as follows. Interacts with and stabilizes bases of the 16S rRNA that are involved in tRNA selection in the A site and with the mRNA backbone. Located at the interface of the 30S and 50S subunits, it traverses the body of the 30S subunit contacting proteins on the other side and probably holding the rRNA structure together. The combined cluster of proteins S8, S12 and S17 appears to hold together the shoulder and platform of the 30S subunit. The polypeptide is Small ribosomal subunit protein uS12 (Acetivibrio thermocellus (strain ATCC 27405 / DSM 1237 / JCM 9322 / NBRC 103400 / NCIMB 10682 / NRRL B-4536 / VPI 7372) (Clostridium thermocellum)).